The chain runs to 103 residues: Large ribosomal subunit protein bL21 (103 aa).

It belongs to the bacterial ribosomal protein bL21 family. In terms of assembly, part of the 50S ribosomal subunit. Contacts protein L20.

Functionally, this protein binds to 23S rRNA in the presence of protein L20. The polypeptide is Large ribosomal subunit protein bL21 (Chloroflexus aurantiacus (strain ATCC 29364 / DSM 637 / Y-400-fl)).